The following is a 506-amino-acid chain: Steroid (22S)-hydroxylase (506 aa).

The helical transmembrane segment at 12-32 (LLFFLPFILLALLTFYTTTVA) threads the bilayer. Cys449 lines the heme pocket.

It belongs to the cytochrome P450 family. The cofactor is heme. In terms of tissue distribution, highly expressed in roots and leaf blades. Expressed in shoot apex, stems, leaf sheaths, inflorescences and flowers.

The protein localises to the membrane. The enzyme catalyses a C28-steroid + reduced [NADPH--hemoprotein reductase] + O2 = a (22S)-22-hydroxy C28-steroid + oxidized [NADPH--hemoprotein reductase] + H2O + H(+). The catalysed reaction is campesterol + reduced [NADPH--hemoprotein reductase] + O2 = (22S)-22-hydroxycampesterol + oxidized [NADPH--hemoprotein reductase] + H2O + H(+). It catalyses the reaction campestanol + reduced [NADPH--hemoprotein reductase] + O2 = 6-deoxycathasterone + oxidized [NADPH--hemoprotein reductase] + H2O + H(+). It participates in plant hormone biosynthesis; brassinosteroid biosynthesis. In terms of biological role, catalyzes the C22-alpha-hydroxylation step in brassinosteroid biosynthesis, which is the rate-limiting step in this biosynthetic pathway. Catalyzes the conversion of campesterol (CR) to (22S)-22-hydroxycampesterol (22-OHCR, 22-hydroxyCR) and of campestanol (CN) to 6-deoxycathasterone (6-deoxoCT). Required for auxin responses involved in the regulation of epidermal cells length of the lamina joint. The chain is Steroid (22S)-hydroxylase from Oryza sativa subsp. japonica (Rice).